Here is a 91-residue protein sequence, read N- to C-terminus: Cell division topological specificity factor (91 aa).

This sequence belongs to the MinE family.

Prevents the cell division inhibition by proteins MinC and MinD at internal division sites while permitting inhibition at polar sites. This ensures cell division at the proper site by restricting the formation of a division septum at the midpoint of the long axis of the cell. The chain is Cell division topological specificity factor from Caldanaerobacter subterraneus subsp. tengcongensis (strain DSM 15242 / JCM 11007 / NBRC 100824 / MB4) (Thermoanaerobacter tengcongensis).